Consider the following 135-residue polypeptide: MLSPKKVKHRKVQKGRMQGVARRGGVLNFGQFGLQALECGFVTNRQIEAARIAMTRHVKRGGKIWIRIFPDKPFTKKPAEVRMGKGKGAPEGWVAVIKPGRILYEMDGVSYELAAEALRLAAHKLPIKTKIVARS.

Belongs to the universal ribosomal protein uL16 family. Part of the 50S ribosomal subunit.

In terms of biological role, binds 23S rRNA and is also seen to make contacts with the A and possibly P site tRNAs. In Desulfatibacillum aliphaticivorans, this protein is Large ribosomal subunit protein uL16.